A 108-amino-acid chain; its full sequence is Probable chaperone-like protein YdbL (108 aa).

A signal peptide spans 1–21 (MKKTLLLCAFLVGLVSSNVMA).

The protein localises to the periplasm. Its function is as follows. Probably acts as a chaperone-like protein that contributes to, but is not required for, the formation of the YdbH-YnbE intermembrane bridge. Affects the function and the structure of the YdbH-YnbE complex. Overexpression of ydbL causes a negative effect on YdbH-YnbE function. This is Probable chaperone-like protein YdbL (ydbL) from Escherichia coli (strain K12).